A 71-amino-acid polypeptide reads, in one-letter code: Translation initiation factor IF-1 (71 aa).

The region spanning 1 to 71 (MAKQSAIEQD…LSKARITYRY (71 aa)) is the S1-like domain.

This sequence belongs to the IF-1 family. As to quaternary structure, component of the 30S ribosomal translation pre-initiation complex which assembles on the 30S ribosome in the order IF-2 and IF-3, IF-1 and N-formylmethionyl-tRNA(fMet); mRNA recruitment can occur at any time during PIC assembly.

It is found in the cytoplasm. Its function is as follows. One of the essential components for the initiation of protein synthesis. Stabilizes the binding of IF-2 and IF-3 on the 30S subunit to which N-formylmethionyl-tRNA(fMet) subsequently binds. Helps modulate mRNA selection, yielding the 30S pre-initiation complex (PIC). Upon addition of the 50S ribosomal subunit IF-1, IF-2 and IF-3 are released leaving the mature 70S translation initiation complex. This Flavobacterium psychrophilum (strain ATCC 49511 / DSM 21280 / CIP 103535 / JIP02/86) protein is Translation initiation factor IF-1.